We begin with the raw amino-acid sequence, 231 residues long: Biosynthetic peptidoglycan transglycosylase (231 aa).

Residues 12–34 traverse the membrane as a helical segment; it reads AAVLAGLALLLVALAVSYRWVPP.

Belongs to the glycosyltransferase 51 family.

The protein localises to the cell inner membrane. It carries out the reaction [GlcNAc-(1-&gt;4)-Mur2Ac(oyl-L-Ala-gamma-D-Glu-L-Lys-D-Ala-D-Ala)](n)-di-trans,octa-cis-undecaprenyl diphosphate + beta-D-GlcNAc-(1-&gt;4)-Mur2Ac(oyl-L-Ala-gamma-D-Glu-L-Lys-D-Ala-D-Ala)-di-trans,octa-cis-undecaprenyl diphosphate = [GlcNAc-(1-&gt;4)-Mur2Ac(oyl-L-Ala-gamma-D-Glu-L-Lys-D-Ala-D-Ala)](n+1)-di-trans,octa-cis-undecaprenyl diphosphate + di-trans,octa-cis-undecaprenyl diphosphate + H(+). It functions in the pathway cell wall biogenesis; peptidoglycan biosynthesis. Functionally, peptidoglycan polymerase that catalyzes glycan chain elongation from lipid-linked precursors. The protein is Biosynthetic peptidoglycan transglycosylase of Rhodospirillum centenum (strain ATCC 51521 / SW).